Consider the following 430-residue polypeptide: Maintenance of mitochondrial morphology protein 1 (430 aa).

The Lumenal portion of the chain corresponds to 1-70 (MSQGLIETTT…NGNTWSFTQG (70 aa)). The chain crosses the membrane as a helical span at residues 71–91 (LVIGQISVIFIIIVFVKFFVF). The Cytoplasmic portion of the chain corresponds to 92-430 (ADSSSHIPTK…TPGEFVNSNI (339 aa)). The SMP-LTD domain maps to 159 to 387 (ASESLDWFNV…EPRFQVVRLP (229 aa)). A disordered region spans residues 305 to 326 (GYSKENGSADSASDNDEDEDDG). Acidic residues predominate over residues 317–326 (SDNDEDEDDG).

The protein belongs to the MMM1 family. As to quaternary structure, homodimer. Component of the ER-mitochondria encounter structure (ERMES) or MDM complex, composed of MMM1, MDM10, MDM12 and MDM34. An MMM1 homodimer associates with one molecule of MDM12 on each side in a pairwise head-to-tail manner, and the SMP-LTD domains of MMM1 and MDM12 generate a continuous hydrophobic tunnel for phospholipid trafficking.

The protein resides in the endoplasmic reticulum membrane. Component of the ERMES/MDM complex, which serves as a molecular tether to connect the endoplasmic reticulum (ER) and mitochondria. Components of this complex are involved in the control of mitochondrial shape and protein biogenesis, and function in nonvesicular lipid trafficking between the ER and mitochondria. The MDM12-MMM1 subcomplex functions in the major beta-barrel assembly pathway that is responsible for biogenesis of all outer membrane beta-barrel proteins, and acts in a late step after the SAM complex. The MDM10-MDM12-MMM1 subcomplex further acts in the TOM40-specific pathway after the action of the MDM12-MMM1 complex. Essential for establishing and maintaining the structure of mitochondria and maintenance of mtDNA nucleoids. The sequence is that of Maintenance of mitochondrial morphology protein 1 from Candida dubliniensis (strain CD36 / ATCC MYA-646 / CBS 7987 / NCPF 3949 / NRRL Y-17841) (Yeast).